The following is a 299-amino-acid chain: UDP-N-acetylenolpyruvoylglucosamine reductase (299 aa).

Residues 26 to 191 form the FAD-binding PCMH-type domain; sequence GIGGPAKYFV…VSATFQLNAS (166 aa). The active site involves R170. C218 functions as the Proton donor in the catalytic mechanism. E288 is an active-site residue.

Belongs to the MurB family. FAD is required as a cofactor.

It localises to the cytoplasm. It catalyses the reaction UDP-N-acetyl-alpha-D-muramate + NADP(+) = UDP-N-acetyl-3-O-(1-carboxyvinyl)-alpha-D-glucosamine + NADPH + H(+). It functions in the pathway cell wall biogenesis; peptidoglycan biosynthesis. Functionally, cell wall formation. The chain is UDP-N-acetylenolpyruvoylglucosamine reductase from Protochlamydia amoebophila (strain UWE25).